The chain runs to 604 residues: Complement factor I (604 aa).

An N-terminal signal peptide occupies residues 1–18 (MKLALLILLLLNPHLSSS). 20 disulfides stabilise this stretch: Cys36–Cys260, Cys46–Cys57, Cys51–Cys62, Cys64–Cys96, Cys70–Cys89, Cys78–Cys109, Cys144–Cys186, Cys157–Cys219, Cys191–Cys201, Cys234–Cys252, Cys246–Cys261, Cys264–Cys276, Cys271–Cys289, Cys283–Cys298, Cys349–Cys474, Cys387–Cys403, Cys395–Cys465, Cys488–Cys552, Cys516–Cys531, and Cys542–Cys571. N-linked (GlcNAc...) asparagine glycosylation occurs at Asn40. The Kazal-like domain maps to 58–111 (IEGTCACKLPYQCPKAGTPVCATNGRGYPTYCHLKSFECLHPEIKFSNNGTCTA). 3 N-linked (GlcNAc...) asparagine glycosylation sites follow: Asn106, Asn116, and Asn182. The 101-residue stretch at 117–217 (VSLIYGSTDT…SKAPHGLAGV (101 aa)) folds into the SRCR domain. LDL-receptor class A domains follow at residues 218–262 (VCYT…LCCK) and 263–299 (GCRG…SGCE). Ca(2+) contacts are provided by Lys244, Asp247, Val249, Asp251, Asp257, and Glu258. Ca(2+) contacts are provided by Asn284, Glu286, Asp288, Asp294, and Glu295. In terms of domain architecture, Peptidase S1 spans 362–595 (VVGGKPAEMG…YFDWISYYVG (234 aa)). Active-site charge relay system residues include His402 and Asp450. Asn515 is a glycosylation site (N-linked (GlcNAc...) asparagine). The active-site Charge relay system is the Ser546. An N-linked (GlcNAc...) asparagine glycan is attached at Asn557.

This sequence belongs to the peptidase S1 family. Heterodimer of a light and heavy chains; disulfide-linked. The fully processed and mature protein circulates as a zymogen, and is allosterically activated by substrate-induced remodeling of the active site. Interacts with C3b. Interacts with complement factor H. Expressed in the liver by hepatocytes. Also present in other cells such as monocytes, fibroblasts or keratinocytes.

The protein resides in the secreted. The protein localises to the extracellular space. It carries out the reaction Inactivates complement subcomponents C3b, iC3b and C4b by proteolytic cleavage.. Functionally, trypsin-like serine protease that plays an essential role in regulating the immune response by controlling all complement pathways. Inhibits these pathways by cleaving three peptide bonds in the alpha-chain of C3b and two bonds in the alpha-chain of C4b thereby inactivating these proteins. Essential cofactors for these reactions include factor H and C4BP in the fluid phase and membrane cofactor protein/CD46 and CR1 on cell surfaces. The presence of these cofactors on healthy cells allows degradation of deposited C3b by CFI in order to prevent undesired complement activation, while in apoptotic cells or microbes, the absence of such cofactors leads to C3b-mediated complement activation and subsequent opsonization. This chain is Complement factor I (Cfi), found in Rattus norvegicus (Rat).